We begin with the raw amino-acid sequence, 348 residues long: Tocopherol O-methyltransferase, chloroplastic (348 aa).

A chloroplast-targeting transit peptide spans Met-1–Ala-51. At Ala-52 the chain carries N-acetylalanine. Residues Val-130 to Gly-139 are SAM motif I. Positions Gly-193–Met-201 are SAM motif II. The SAM motif III stretch occupies residues Val-220–Ile-229.

The protein belongs to the class I-like SAM-binding methyltransferase superfamily. gTMT family.

The protein resides in the plastid. Its subcellular location is the chloroplast. It catalyses the reaction gamma-tocopherol + S-adenosyl-L-methionine = (+)-alpha-tocopherol + S-adenosyl-L-homocysteine + H(+). It carries out the reaction delta-tocotrienol + S-adenosyl-L-methionine = beta-tocotrienol + S-adenosyl-L-homocysteine + H(+). The enzyme catalyses gamma-tocotrienol + S-adenosyl-L-methionine = alpha-tocotrienol + S-adenosyl-L-homocysteine + H(+). The catalysed reaction is delta-tocopherol + S-adenosyl-L-methionine = beta-tocopherol + S-adenosyl-L-homocysteine + H(+). It functions in the pathway cofactor biosynthesis; tocopherol biosynthesis. Functionally, involved in the synthesis of tocopherol (vitamin E). Methylates gamma- and delta-tocopherol to form beta- and alpha-tocopherol, respectively. The chain is Tocopherol O-methyltransferase, chloroplastic (VTE4) from Arabidopsis thaliana (Mouse-ear cress).